The following is a 582-amino-acid chain: Vesicular glutamate transporter 2 (582 aa).

The Cytoplasmic segment spans residues 1 to 71 (MESVKQRILA…CTCFGLPRRY (71 aa)). The helical transmembrane segment at 72-92 (IIAIMSGLGFCISFGIRCNLG) threads the bilayer. The Vesicular portion of the chain corresponds to 93–125 (VAIVDMVNNSTIHRGGKVIKEKAKFNWDPETVG). Residues Asn100 and Asn101 are each glycosylated (N-linked (GlcNAc...) asparagine). Residues 126–146 (MIHGSFFWGYIITQIPGGYIA) traverse the membrane as a helical segment. Residues 147–148 (SR) are Cytoplasmic-facing. Residues 149–169 (LAANRVFGAAILLTSTLNMLI) form a helical membrane-spanning segment. At 170–177 (PSAARVHY) the chain is on the vesicular side. Residues 178-198 (GCVIFVRILQGLVEGVTYPAC) traverse the membrane as a helical segment. The Cytoplasmic segment spans residues 199–216 (HGIWSKWAPPLERSRLAT). A helical transmembrane segment spans residues 217 to 237 (TSFCGSYAGAVIAMPLAGILV). Residues 238–244 (QYTGWSS) are Vesicular-facing. The helical transmembrane segment at 245–265 (VFYVYGSFGMVWYMFWLLVSY) threads the bilayer. Residues 266 to 310 (ESPAKHPTITDEERRYIEESIGESANLLGAMEKFKTPWRKFFTSM) lie on the Cytoplasmic side of the membrane. The helical transmembrane segment at 311-331 (PVYAIIVANFCRSWTFYLLLI) threads the bilayer. Residues 332–349 (SQPAYFEEVFGFEISKVG) are Vesicular-facing. The chain crosses the membrane as a helical span at residues 350-370 (MLSAVPHLVMTIIVPIGGQIA). The Cytoplasmic portion of the chain corresponds to 371–386 (DFLRSKQILSTTTVRK). Residues 387-407 (IMNCGGFGMEATLLLVVGYSH) traverse the membrane as a helical segment. Residues 408 to 409 (TR) lie on the Vesicular side of the membrane. Residues 410–430 (GVAISFLVLAVGFSGFAISGF) form a helical membrane-spanning segment. The Cytoplasmic segment spans residues 431–443 (NVNHLDIAPRYAS). A helical membrane pass occupies residues 444–464 (ILMGISDGVGTLSGMVCPIIV). Residues 465 to 477 (GAMTKNKSREEWQ) are Vesicular-facing. Asn470 carries an N-linked (GlcNAc...) asparagine glycan. The chain crosses the membrane as a helical span at residues 478-498 (YVFLIAALVHYGGVIFYALFA). The Cytoplasmic portion of the chain corresponds to 499–582 (SGEKQPWADP…YTYKDRDDYS (84 aa)).

Belongs to the major facilitator superfamily. Sodium/anion cotransporter family. VGLUT subfamily. As to expression, expressed in brain. Expressed in hippocampal neurons (at protein level).

The protein localises to the cytoplasmic vesicle. It is found in the secretory vesicle. Its subcellular location is the synaptic vesicle membrane. It localises to the synapse. The protein resides in the synaptosome. The protein localises to the cell membrane. It catalyses the reaction L-glutamate(out) = L-glutamate(in). The catalysed reaction is K(+)(in) + H(+)(out) = K(+)(out) + H(+)(in). The enzyme catalyses 3 Na(+)(out) + phosphate(out) = 3 Na(+)(in) + phosphate(in). It carries out the reaction phosphate(in) = phosphate(out). It catalyses the reaction chloride(in) = chloride(out). With respect to regulation, chloride channel activity is allosterically activated by lumenal H(+) and Cl(-) leading to synaptic vesicles acidification. The L-glutamate transport activity is allosterically activated by lumenal H(+) and Cl(-). The allosteric requirement for H(+) efficiently prevents non-vesicular efflux across the plasma membrane. The L-glutamate uniporter activity exhibits a biphasic dependence on chloride concentration. Functionally, multifunctional transporter that transports L-glutamate as well as multiple ions such as chloride, proton, potassium, sodium and phosphate. At the synaptic vesicle membrane, mainly functions as a uniporter which transports preferentially L-glutamate but also, phosphate from the cytoplasm into synaptic vesicles at presynaptic nerve terminals of excitatory neural cells. The L-glutamate or phosphate uniporter activity is electrogenic and is driven by the proton electrochemical gradient, mainly by the electrical gradient established by the vacuolar H(+)-ATPase across the synaptic vesicle membrane. In addition, functions as a chloride channel that allows a chloride permeation through the synaptic vesicle membrane therefore affects the proton electrochemical gradient and promotes synaptic vesicles acidification. Moreover, functions as a vesicular K(+)/H(+) antiport allowing to maintain the electrical gradient and to decrease chemical gradient and therefore sustain vesicular glutamate uptake. The vesicular H(+)/H(+) antiport activity is electroneutral. At the plasma membrane, following exocytosis, functions as a symporter of Na(+) and phosphate from the extracellular space to the cytoplasm allowing synaptic phosphate homeostasis regulation. The symporter activity is driven by an inside negative membrane potential and is electrogenic. Also involved in the regulation of retinal hyaloid vessel regression during postnatal development. May also play a role in the endocrine glutamatergic system of other tissues such as pineal gland and pancreas. The sequence is that of Vesicular glutamate transporter 2 from Mus musculus (Mouse).